The sequence spans 309 residues: L-arabinose 1-dehydrogenase (NAD(P)(+)) (309 aa).

NADP(+)-binding positions include isoleucine 15 and 37–38 (SR). The active-site Proton donor is lysine 91. An NADP(+)-binding site is contributed by aspartate 169.

It belongs to the Gfo/Idh/MocA family. In terms of assembly, monomer.

The catalysed reaction is alpha-L-arabinopyanose + NAD(+) = L-arabinono-1,4-lactone + NADH + H(+). It carries out the reaction alpha-L-arabinopyanose + NADP(+) = L-arabinono-1,4-lactone + NADPH + H(+). The enzyme catalyses D-galactose + NAD(+) = D-galactono-1,4-lactone + NADH + H(+). It catalyses the reaction D-galactose + NADP(+) = D-galactono-1,5-lactone + NADPH + H(+). It functions in the pathway carbohydrate degradation; L-arabinose degradation via L-arabinono-1,4-lactone pathway. Its function is as follows. Catalyzes the NAD(P)(+)-dependent conversion of L-arabinose to L-arabino-gamma-lactone. Is involved in a degradation pathway of L-arabinose that allows A.brasilense to grow on L-arabinose as a sole carbon source. Prefers NADP(+) to NAD(+) as electron acceptor. Displays high catalytic efficiency for both L-arabinose and D-galactose in vitro. However, the enzyme appears to be involved in the metabolism of L-arabinose but not D-galactose in vivo. To a lesser extent, is also active on D-talose and D-xylose as substrates in vitro, but not with D-arabinose, D-glucose, D-ribose, L-xylose, L-mannose, L-lyxose, and D-fructose. This Azospirillum brasilense protein is L-arabinose 1-dehydrogenase (NAD(P)(+)) (araA).